A 300-amino-acid chain; its full sequence is Ribonuclease Z (300 aa).

Histidine 63, histidine 65, aspartate 67, histidine 68, histidine 140, aspartate 207, and histidine 265 together coordinate Zn(2+). Aspartate 67 (proton acceptor) is an active-site residue.

The protein belongs to the RNase Z family. As to quaternary structure, homodimer. The cofactor is Zn(2+).

The catalysed reaction is Endonucleolytic cleavage of RNA, removing extra 3' nucleotides from tRNA precursor, generating 3' termini of tRNAs. A 3'-hydroxy group is left at the tRNA terminus and a 5'-phosphoryl group is left at the trailer molecule.. Its function is as follows. Zinc phosphodiesterase, which displays some tRNA 3'-processing endonuclease activity. Probably involved in tRNA maturation, by removing a 3'-trailer from precursor tRNA. The sequence is that of Ribonuclease Z from Ignicoccus hospitalis (strain KIN4/I / DSM 18386 / JCM 14125).